The primary structure comprises 206 residues: Translation initiation factor IF-3 (206 aa).

This sequence belongs to the IF-3 family. In terms of assembly, monomer.

Its subcellular location is the cytoplasm. IF-3 binds to the 30S ribosomal subunit and shifts the equilibrium between 70S ribosomes and their 50S and 30S subunits in favor of the free subunits, thus enhancing the availability of 30S subunits on which protein synthesis initiation begins. This chain is Translation initiation factor IF-3, found in Shigella flexneri.